We begin with the raw amino-acid sequence, 199 residues long: Fe/S biogenesis protein NfuA (199 aa).

Positions 151 and 154 each coordinate [4Fe-4S] cluster.

The protein belongs to the NfuA family. As to quaternary structure, homodimer. [4Fe-4S] cluster serves as cofactor.

Its function is as follows. Involved in iron-sulfur cluster biogenesis. Binds a 4Fe-4S cluster, can transfer this cluster to apoproteins, and thereby intervenes in the maturation of Fe/S proteins. Could also act as a scaffold/chaperone for damaged Fe/S proteins. This is Fe/S biogenesis protein NfuA from Xanthomonas axonopodis pv. citri (strain 306).